The primary structure comprises 335 residues: uncharacterized protein (335 aa).

The region spanning 21-258 is the ABC transporter domain; sequence VMTSDLRKVY…QNTYHVQGQN (238 aa). An ATP-binding site is contributed by 60-67; it reads GPNGAGKT.

Belongs to the ABC transporter superfamily.

This is an uncharacterized protein from Nostoc sp. (strain PCC 7120 / SAG 25.82 / UTEX 2576).